Reading from the N-terminus, the 158-residue chain is MAQEKVFPMTETGKKKLEEELEYLKTVKRKEVVERIKVARSFGDLSENSEYDSAKEEQAFVEGRITTLDNMIRNAKIIEDDGANSDIVSLGKTVTFTELPDGEEESYTIVGSAEADPFEGKISNDSPIAKSLLGKQVGDEVTVQTPGGEMLVKIVKIS.

The protein belongs to the GreA/GreB family.

Functionally, necessary for efficient RNA polymerase transcription elongation past template-encoded arresting sites. The arresting sites in DNA have the property of trapping a certain fraction of elongating RNA polymerases that pass through, resulting in locked ternary complexes. Cleavage of the nascent transcript by cleavage factors such as GreA or GreB allows the resumption of elongation from the new 3'terminus. GreA releases sequences of 2 to 3 nucleotides. The polypeptide is Transcription elongation factor GreA (Bacillus licheniformis (strain ATCC 14580 / DSM 13 / JCM 2505 / CCUG 7422 / NBRC 12200 / NCIMB 9375 / NCTC 10341 / NRRL NRS-1264 / Gibson 46)).